The chain runs to 447 residues: Phosphoglucosamine mutase (447 aa).

S100 acts as the Phosphoserine intermediate in catalysis. S100, D240, D242, and D244 together coordinate Mg(2+). S100 is modified (phosphoserine).

Belongs to the phosphohexose mutase family. Mg(2+) serves as cofactor. Activated by phosphorylation.

It carries out the reaction alpha-D-glucosamine 1-phosphate = D-glucosamine 6-phosphate. In terms of biological role, catalyzes the conversion of glucosamine-6-phosphate to glucosamine-1-phosphate. The protein is Phosphoglucosamine mutase of Clostridium botulinum (strain Eklund 17B / Type B).